Consider the following 546-residue polypeptide: Methionine--tRNA ligase (546 aa).

A 'HIGH' region motif is present at residues 15–25; that stretch reads PYANGPIHLGH. The Zn(2+) site is built by C146, C149, C159, and C162. Positions 332-336 match the 'KMSKS' region motif; sequence KMSKS. K335 provides a ligand contact to ATP.

This sequence belongs to the class-I aminoacyl-tRNA synthetase family. MetG type 1 subfamily. Monomer. The cofactor is Zn(2+).

The protein localises to the cytoplasm. It carries out the reaction tRNA(Met) + L-methionine + ATP = L-methionyl-tRNA(Met) + AMP + diphosphate. In terms of biological role, is required not only for elongation of protein synthesis but also for the initiation of all mRNA translation through initiator tRNA(fMet) aminoacylation. In Coxiella burnetii (strain Dugway 5J108-111), this protein is Methionine--tRNA ligase.